We begin with the raw amino-acid sequence, 176 residues long: Inorganic pyrophosphatase (176 aa).

Substrate is bound by residues lysine 30, arginine 44, and tyrosine 56. 3 residues coordinate Mg(2+): aspartate 66, aspartate 71, and aspartate 103. Tyrosine 142 provides a ligand contact to substrate.

This sequence belongs to the PPase family. As to quaternary structure, homohexamer. Requires Mg(2+) as cofactor.

It localises to the cytoplasm. It carries out the reaction diphosphate + H2O = 2 phosphate + H(+). Functionally, catalyzes the hydrolysis of inorganic pyrophosphate (PPi) forming two phosphate ions. This chain is Inorganic pyrophosphatase, found in Vibrio parahaemolyticus serotype O3:K6 (strain RIMD 2210633).